The primary structure comprises 612 residues: Citryl-spermidine/3,4-dihydroxybenzoyl-citryl-spermidine:spermidine ligase (612 aa).

Residues 282-284, Lys-298, Arg-310, Tyr-390, and Glu-461 contribute to the ATP site; that span reads SMR.

This sequence belongs to the IucA/IucC family. Homodimer.

It catalyses the reaction N(8)-citryl-spermidine + spermidine + ATP = N(8),N'(8)-citryl-bis(spermidine) + AMP + diphosphate + H(+). The catalysed reaction is N(1)-(3,4-dihydroxybenzoyl)-N(8)-citryl-spermidine + spermidine + ATP = N(1)-(3,4-dihydroxybenzoyl)-N(8),N'(8)-citryl-bis(spermidine) + AMP + diphosphate + H(+). It participates in siderophore biosynthesis; petrobactin biosynthesis. Involved in the biosynthesis of petrobactin, a catecholate siderophore that functions in both iron acquisition and virulence. Catalyzes the ATP-dependent condensation of spermidine with N(8)-citryl-spermidine or N(1)-(3,4-dihydroxbenzoyl)-N(8)-citryl-spermidine, two intermediates in petrobactin biosynthesis pathway. In Bacillus anthracis, this protein is Citryl-spermidine/3,4-dihydroxybenzoyl-citryl-spermidine:spermidine ligase.